A 60-amino-acid polypeptide reads, in one-letter code: Beta-toxin BotIT2 (60 aa).

The region spanning 1–60 (DGYIKGYKGCKITCVINDDYCDTECKAEGGTYGYCWKWGLACWCEDLPDEKRWKSETNTC) is the LCN-type CS-alpha/beta domain. Disulfide bonds link Cys10–Cys60, Cys14–Cys35, Cys21–Cys42, and Cys25–Cys44.

This sequence belongs to the long (4 C-C) scorpion toxin superfamily. Sodium channel inhibitor family. Beta subfamily. Expressed by the venom gland.

It localises to the secreted. In terms of biological role, beta toxins bind voltage-independently at site-4 of sodium channels (Nav) and shift the voltage of activation toward more negative potentials thereby affecting sodium channel activation and promoting spontaneous and repetitive firing. This toxin specifically acts by inducing a new current with very slow activation/deactivation kinetics due to the transformation of normal fast channels into slow ones. It possess properties of excitatory and depressant toxins. It is highly active on insects and less active on mammals. In Buthus occitanus tunetanus (Common European scorpion), this protein is Beta-toxin BotIT2.